Reading from the N-terminus, the 464-residue chain is 3-isopropylmalate dehydratase large subunit (464 aa).

Positions 345, 405, and 408 each coordinate [4Fe-4S] cluster.

This sequence belongs to the aconitase/IPM isomerase family. LeuC type 1 subfamily. Heterodimer of LeuC and LeuD. [4Fe-4S] cluster serves as cofactor.

The catalysed reaction is (2R,3S)-3-isopropylmalate = (2S)-2-isopropylmalate. It functions in the pathway amino-acid biosynthesis; L-leucine biosynthesis; L-leucine from 3-methyl-2-oxobutanoate: step 2/4. Its function is as follows. Catalyzes the isomerization between 2-isopropylmalate and 3-isopropylmalate, via the formation of 2-isopropylmaleate. In Bacteroides fragilis (strain ATCC 25285 / DSM 2151 / CCUG 4856 / JCM 11019 / LMG 10263 / NCTC 9343 / Onslow / VPI 2553 / EN-2), this protein is 3-isopropylmalate dehydratase large subunit.